We begin with the raw amino-acid sequence, 615 residues long: 1-deoxy-D-xylulose-5-phosphate synthase (615 aa).

Residues His72 and 111-113 contribute to the thiamine diphosphate site; that span reads GHS. Asp142 serves as a coordination point for Mg(2+). Residues 143-144, Asn171, Tyr278, and Glu360 contribute to the thiamine diphosphate site; that span reads GA. Asn171 contacts Mg(2+).

It belongs to the transketolase family. DXPS subfamily. As to quaternary structure, homodimer. Mg(2+) is required as a cofactor. The cofactor is thiamine diphosphate.

The catalysed reaction is D-glyceraldehyde 3-phosphate + pyruvate + H(+) = 1-deoxy-D-xylulose 5-phosphate + CO2. Its pathway is metabolic intermediate biosynthesis; 1-deoxy-D-xylulose 5-phosphate biosynthesis; 1-deoxy-D-xylulose 5-phosphate from D-glyceraldehyde 3-phosphate and pyruvate: step 1/1. Functionally, catalyzes the acyloin condensation reaction between C atoms 2 and 3 of pyruvate and glyceraldehyde 3-phosphate to yield 1-deoxy-D-xylulose-5-phosphate (DXP). This chain is 1-deoxy-D-xylulose-5-phosphate synthase, found in Campylobacter jejuni subsp. jejuni serotype O:23/36 (strain 81-176).